Consider the following 173-residue polypeptide: uncharacterized protein (173 aa).

4 consecutive transmembrane segments (helical) span residues 13–35, 50–72, 107–129, and 139–161; these read LQVI…PLLS, IIFI…FLGL, NYLI…KYLL, and GYLI…RLIL.

Its subcellular location is the cell membrane. This is an uncharacterized protein from Rickettsia prowazekii (strain Madrid E).